The chain runs to 161 residues: MRCPFCGHPDTQVKDSRPAEDGNAIRRRRQCPSCAARFTTFERVQLRELTVMKKSGRRVPFDREKLNRSIQLAMQKRNIEPDRIDQMISGIVRRLESTGETDVTSDRVGELVMEGLKNLDAVAYVRYASVYKDFHKVEDFREFITDEALTAHFGPREDDDG.

The segment at methionine 1 to asparagine 23 is disordered. A zinc finger lies at cysteine 3–cysteine 34. A compositionally biased stretch (basic and acidic residues) spans threonine 11–asparagine 23. An ATP-cone domain is found at leucine 49 to aspartate 139.

The protein belongs to the NrdR family. Zn(2+) serves as cofactor.

Negatively regulates transcription of bacterial ribonucleotide reductase nrd genes and operons by binding to NrdR-boxes. The polypeptide is Transcriptional repressor NrdR (Maricaulis maris (strain MCS10) (Caulobacter maris)).